Reading from the N-terminus, the 490-residue chain is Phosphoglucosamine mutase (490 aa).

The active-site Phosphoserine intermediate is serine 139. Mg(2+) contacts are provided by serine 139, aspartate 279, aspartate 281, and aspartate 283. A Phosphoserine modification is found at serine 139.

The protein belongs to the phosphohexose mutase family. Mg(2+) serves as cofactor. Post-translationally, activated by phosphorylation.

It catalyses the reaction alpha-D-glucosamine 1-phosphate = D-glucosamine 6-phosphate. Its function is as follows. Catalyzes the conversion of glucosamine-6-phosphate to glucosamine-1-phosphate. The chain is Phosphoglucosamine mutase from Nostoc sp. (strain PCC 7120 / SAG 25.82 / UTEX 2576).